A 352-amino-acid chain; its full sequence is Zinc finger CCCH domain-containing protein 42 (352 aa).

Positions 36 to 114 (AYVYVGGIPF…RTIKVDHCGA (79 aa)) constitute an RRM domain. 2 consecutive C3H1-type zinc fingers follow at residues 130–157 (REARGVCRAFQRGECTRGDSCKFSHDEK) and 180–207 (REGRGVCRAFQRGECTRGDSCKFSHDEK). The tract at residues 156-179 (EKRAANTGWGHEEDRSSKWDHDKN) is disordered. 3 stretches are compositionally biased toward basic and acidic residues: residues 210-230 (ATTGWGHEEDRSSKWDQDKLN), 243-296 (GDFK…RSGR), and 304-352 (RHND…DRRR). Positions 210–352 (ATTGWGHEED…DSLRREDRRR (143 aa)) are disordered. A coiled-coil region spans residues 319–348 (RAQDWEKRKAESRRDRNDREEKDRDSLRRE).

This Arabidopsis thaliana (Mouse-ear cress) protein is Zinc finger CCCH domain-containing protein 42.